A 769-amino-acid polypeptide reads, in one-letter code: Acetyl-coenzyme A carboxylase carboxyl transferase subunit alpha, chloroplastic (769 aa).

Residues 1 to 54 (MASISHSSLALGGASSASASDYLRSSSNGVNGVPLKTLGRAVFTTIRRKDLAVT) constitute a chloroplast transit peptide. In terms of domain architecture, CoA carboxyltransferase C-terminal spans 132–385 (LENKYRQALK…KIAINENMNE (254 aa)). Coiled-coil stretches lie at residues 426 to 504 (EAVF…ASSE) and 631 to 744 (KQNQ…SDGS). Positions 718–769 (GLQEKQDELEKELAAARELAAEESDGSVKEDDDDDEDSSESGKSEMVNPSFA) are disordered. Basic and acidic residues predominate over residues 721 to 732 (EKQDELEKELAA). Residues 738–756 (AEESDGSVKEDDDDDEDSS) are compositionally biased toward acidic residues. Phosphoserine is present on Ser741.

Belongs to the AccA family. As to quaternary structure, acetyl-CoA carboxylase is a heterohexamer composed of biotin carboxyl carrier protein, biotin carboxylase and two subunits each of ACCase subunit alpha and ACCase plastid-coded subunit beta (accD). As to expression, accumulates in fatty acids synthesizing tissues such as embryos, expanding leaves, flower buds, flowers, and developing siliques.

It localises to the plastid. Its subcellular location is the chloroplast inner membrane. It carries out the reaction N(6)-carboxybiotinyl-L-lysyl-[protein] + acetyl-CoA = N(6)-biotinyl-L-lysyl-[protein] + malonyl-CoA. Its pathway is lipid metabolism; malonyl-CoA biosynthesis; malonyl-CoA from acetyl-CoA: step 1/1. Component of the acetyl coenzyme A carboxylase (ACC) complex. First, biotin carboxylase catalyzes the carboxylation of biotin on its carrier protein (BCCP) and then the CO(2) group is transferred by the carboxyltransferase to acetyl-CoA to form malonyl-CoA. The sequence is that of Acetyl-coenzyme A carboxylase carboxyl transferase subunit alpha, chloroplastic (CAC3) from Arabidopsis thaliana (Mouse-ear cress).